We begin with the raw amino-acid sequence, 763 residues long: Lysine-specific histone demethylase 1 homolog 2 (763 aa).

One can recognise an SWIRM domain in the interval 53–152 (QRETETEALI…FGVSAAFPAS (100 aa)). FAD contacts are provided by Glu192, Arg194, Arg200, and Glu571.

It belongs to the flavin monoamine oxidase family. It depends on FAD as a cofactor.

Functionally, probable histone demethylase. The sequence is that of Lysine-specific histone demethylase 1 homolog 2 from Oryza sativa subsp. japonica (Rice).